Consider the following 790-residue polypeptide: Phenylalanine--tRNA ligase beta subunit (790 aa).

Residues 39–154 form the tRNA-binding domain; the sequence is PDSLNTVVTG…ADTPLGESAC (116 aa). Positions 404-483 constitute a B5 domain; it reads FSPLSLSVRP…FVQKTQKILP (80 aa). Mg(2+)-binding residues include Asp457, Asp463, Glu466, and Glu467. In terms of domain architecture, FDX-ACB spans 694–790; sequence PIYPASSRDI…KLANIGQGNS (97 aa).

This sequence belongs to the phenylalanyl-tRNA synthetase beta subunit family. Type 1 subfamily. In terms of assembly, tetramer of two alpha and two beta subunits. Mg(2+) serves as cofactor.

The protein localises to the cytoplasm. It catalyses the reaction tRNA(Phe) + L-phenylalanine + ATP = L-phenylalanyl-tRNA(Phe) + AMP + diphosphate + H(+). The sequence is that of Phenylalanine--tRNA ligase beta subunit (pheT) from Chlamydia trachomatis serovar D (strain ATCC VR-885 / DSM 19411 / UW-3/Cx).